The primary structure comprises 144 residues: Bacilliredoxin BT9727_3899 (144 aa).

Belongs to the bacilliredoxin family.

The polypeptide is Bacilliredoxin BT9727_3899 (Bacillus thuringiensis subsp. konkukian (strain 97-27)).